Consider the following 364-residue polypeptide: 3-isopropylmalate dehydrogenase (364 aa).

78–91 provides a ligand contact to NAD(+); it reads GKKWDNFPIEERPE. 4 residues coordinate substrate: Arg-99, Arg-109, Arg-138, and Asp-228. Residues Asp-228, Asp-252, and Asp-256 each coordinate Mg(2+). 286–298 lines the NAD(+) pocket; sequence GSAPDIAGKNIAN.

It belongs to the isocitrate and isopropylmalate dehydrogenases family. LeuB type 1 subfamily. In terms of assembly, homodimer. It depends on Mg(2+) as a cofactor. Mn(2+) is required as a cofactor.

It is found in the cytoplasm. The catalysed reaction is (2R,3S)-3-isopropylmalate + NAD(+) = 4-methyl-2-oxopentanoate + CO2 + NADH. Its pathway is amino-acid biosynthesis; L-leucine biosynthesis; L-leucine from 3-methyl-2-oxobutanoate: step 3/4. Functionally, catalyzes the oxidation of 3-carboxy-2-hydroxy-4-methylpentanoate (3-isopropylmalate) to 3-carboxy-4-methyl-2-oxopentanoate. The product decarboxylates to 4-methyl-2 oxopentanoate. In Buchnera aphidicola subsp. Uroleucon obscurum, this protein is 3-isopropylmalate dehydrogenase.